The chain runs to 180 residues: Shikimate kinase (180 aa).

G19–T24 lines the ATP pocket. T23 contacts Mg(2+). 3 residues coordinate substrate: D41, R65, and G87. R125 contacts ATP. R144 contacts substrate.

It belongs to the shikimate kinase family. In terms of assembly, monomer. Mg(2+) is required as a cofactor.

The protein localises to the cytoplasm. The catalysed reaction is shikimate + ATP = 3-phosphoshikimate + ADP + H(+). It participates in metabolic intermediate biosynthesis; chorismate biosynthesis; chorismate from D-erythrose 4-phosphate and phosphoenolpyruvate: step 5/7. Catalyzes the specific phosphorylation of the 3-hydroxyl group of shikimic acid using ATP as a cosubstrate. This Acinetobacter baumannii (strain SDF) protein is Shikimate kinase.